Consider the following 137-residue polypeptide: Ig heavy chain V region MOPC 315 (137 aa).

Positions 1–18 (MKVLSLLYLLTAIPGIMS) are cleaved as a signal peptide. The framework-1 stretch occupies residues 19-48 (DVQLQESGPGLVKPSQSLSLTCSVTGYSIT). Cys40 and Cys114 are joined by a disulfide. The interval 49–54 (SGYFWN) is complementarity-determining-1. The framework-2 stretch occupies residues 55 to 68 (WIRQFPGNKLEWLG). Residues 69-84 (FIKYDGSNGYNPSLKN) form a complementarity-determining-2 region. The interval 85–116 (RVSITRDTSENQFFLKLNSVTTEDTATYYCAG) is framework-3. Residues 117–126 (DNDHLYYFDY) form a complementarity-determining-3 region. The tract at residues 127–137 (WGQGTTLTVSS) is framework-4.

This chain is Ig heavy chain V region MOPC 315, found in Mus musculus (Mouse).